Here is a 460-residue protein sequence, read N- to C-terminus: Bifunctional protein GlmU (460 aa).

Residues 1–233 (MLDIVIMAAG…ETEVLGVNSP (233 aa)) form a pyrophosphorylase region. UDP-N-acetyl-alpha-D-glucosamine is bound by residues Lys21, Gln76, and 81-82 (GT). Position 105 (Asp105) interacts with Mg(2+). 3 residues coordinate UDP-N-acetyl-alpha-D-glucosamine: Gly140, Glu158, and Asn231. Residue Asn231 coordinates Mg(2+). The linker stretch occupies residues 234 to 254 (LQLADLERRLQRKQAEALLEA). The tract at residues 255 to 460 (GVRLADPARF…AGWQRPQKKR (206 aa)) is N-acetyltransferase. Positions 337 and 355 each coordinate UDP-N-acetyl-alpha-D-glucosamine. Residue His367 is the Proton acceptor of the active site. UDP-N-acetyl-alpha-D-glucosamine-binding residues include Tyr370 and Asn381. Residues Ala384, 390-391 (NY), Ser409, Gly427, and Arg444 each bind acetyl-CoA.

In the N-terminal section; belongs to the N-acetylglucosamine-1-phosphate uridyltransferase family. It in the C-terminal section; belongs to the transferase hexapeptide repeat family. In terms of assembly, homotrimer. Mg(2+) serves as cofactor.

The protein resides in the cytoplasm. It catalyses the reaction alpha-D-glucosamine 1-phosphate + acetyl-CoA = N-acetyl-alpha-D-glucosamine 1-phosphate + CoA + H(+). The enzyme catalyses N-acetyl-alpha-D-glucosamine 1-phosphate + UTP + H(+) = UDP-N-acetyl-alpha-D-glucosamine + diphosphate. The protein operates within nucleotide-sugar biosynthesis; UDP-N-acetyl-alpha-D-glucosamine biosynthesis; N-acetyl-alpha-D-glucosamine 1-phosphate from alpha-D-glucosamine 6-phosphate (route II): step 2/2. It functions in the pathway nucleotide-sugar biosynthesis; UDP-N-acetyl-alpha-D-glucosamine biosynthesis; UDP-N-acetyl-alpha-D-glucosamine from N-acetyl-alpha-D-glucosamine 1-phosphate: step 1/1. Its pathway is bacterial outer membrane biogenesis; LPS lipid A biosynthesis. Catalyzes the last two sequential reactions in the de novo biosynthetic pathway for UDP-N-acetylglucosamine (UDP-GlcNAc). The C-terminal domain catalyzes the transfer of acetyl group from acetyl coenzyme A to glucosamine-1-phosphate (GlcN-1-P) to produce N-acetylglucosamine-1-phosphate (GlcNAc-1-P), which is converted into UDP-GlcNAc by the transfer of uridine 5-monophosphate (from uridine 5-triphosphate), a reaction catalyzed by the N-terminal domain. The polypeptide is Bifunctional protein GlmU (Methylibium petroleiphilum (strain ATCC BAA-1232 / LMG 22953 / PM1)).